The primary structure comprises 244 residues: tRNA (guanine-N(1)-)-methyltransferase (244 aa).

S-adenosyl-L-methionine contacts are provided by residues glycine 113 and 133–138 (IGDYVL).

The protein belongs to the RNA methyltransferase TrmD family. Homodimer.

It is found in the cytoplasm. The enzyme catalyses guanosine(37) in tRNA + S-adenosyl-L-methionine = N(1)-methylguanosine(37) in tRNA + S-adenosyl-L-homocysteine + H(+). Its function is as follows. Specifically methylates guanosine-37 in various tRNAs. This chain is tRNA (guanine-N(1)-)-methyltransferase, found in Bacillus cereus (strain B4264).